The chain runs to 243 residues: Outer membrane protein A (243 aa).

The next 5 beta stranded transmembrane spans lie at 1–8 (LTAKLGYP), 13–21 (LDIYTRLGG), 47–56 (PVFAGGLEWA), 61–68 (IATRLEYQ), and 87–95 (LLSVGVSYR). Repeat copies occupy residues 107 to 108 (AP), 109 to 110 (AP), 111 to 112 (AP), and 113 to 114 (AP). Residues 107 to 114 (APAPAPAP) are 4 X 2 AA tandem repeats of A-P. Residues 116 to 243 (VQTKHFTLKS…RRVEIEVKGI (128 aa)) enclose the OmpA-like domain. A disulfide bond links Cys217 and Cys229.

The protein belongs to the outer membrane OOP (TC 1.B.6) superfamily. OmpA family. In terms of assembly, monomer and homodimer.

Its subcellular location is the cell outer membrane. With TolR probably plays a role in maintaining the position of the peptidoglycan cell wall in the periplasm. Acts as a porin with low permeability that allows slow penetration of small solutes; an internal gate slows down solute passage. This is Outer membrane protein A from Atlantibacter hermannii (Escherichia hermannii).